Here is a 349-residue protein sequence, read N- to C-terminus: Mannonate dehydratase (349 aa).

This sequence belongs to the mannonate dehydratase family. The cofactor is Fe(2+). Requires Mn(2+) as cofactor.

The catalysed reaction is D-mannonate = 2-dehydro-3-deoxy-D-gluconate + H2O. It participates in carbohydrate metabolism; pentose and glucuronate interconversion. Functionally, catalyzes the dehydration of D-mannonate. The polypeptide is Mannonate dehydratase (Oceanobacillus iheyensis (strain DSM 14371 / CIP 107618 / JCM 11309 / KCTC 3954 / HTE831)).